A 295-amino-acid chain; its full sequence is 4-hydroxybenzoate octaprenyltransferase (295 aa).

A run of 8 helical transmembrane segments spans residues 28–48 (AGWL…AGGF), 51–71 (WHLL…GCCV), 101–121 (ALGV…TTNA), 124–144 (IAWS…KRFV), 159–179 (IPMA…WLVL), 220–240 (VMAF…PFGL), 242–262 (WPLH…WRLI), and 274–294 (FTGN…GFAL).

Belongs to the UbiA prenyltransferase family. Mg(2+) serves as cofactor.

Its subcellular location is the cell inner membrane. The enzyme catalyses all-trans-octaprenyl diphosphate + 4-hydroxybenzoate = 4-hydroxy-3-(all-trans-octaprenyl)benzoate + diphosphate. It functions in the pathway cofactor biosynthesis; ubiquinone biosynthesis. Catalyzes the prenylation of para-hydroxybenzoate (PHB) with an all-trans polyprenyl group. Mediates the second step in the final reaction sequence of ubiquinone-8 (UQ-8) biosynthesis, which is the condensation of the polyisoprenoid side chain with PHB, generating the first membrane-bound Q intermediate 3-octaprenyl-4-hydroxybenzoate. In Paracidovorax citrulli (strain AAC00-1) (Acidovorax citrulli), this protein is 4-hydroxybenzoate octaprenyltransferase.